A 450-amino-acid polypeptide reads, in one-letter code: Phosphoglucosamine mutase (450 aa).

The active-site Phosphoserine intermediate is serine 101. Serine 101, aspartate 240, aspartate 242, and aspartate 244 together coordinate Mg(2+). A Phosphoserine modification is found at serine 101.

The protein belongs to the phosphohexose mutase family. Mg(2+) is required as a cofactor. In terms of processing, activated by phosphorylation.

The catalysed reaction is alpha-D-glucosamine 1-phosphate = D-glucosamine 6-phosphate. Its function is as follows. Catalyzes the conversion of glucosamine-6-phosphate to glucosamine-1-phosphate. The chain is Phosphoglucosamine mutase from Streptococcus uberis (strain ATCC BAA-854 / 0140J).